Reading from the N-terminus, the 562-residue chain is Arginine--tRNA ligase (562 aa).

The short motif at 121-131 (PNIAKPISMGH) is the 'HIGH' region element.

It belongs to the class-I aminoacyl-tRNA synthetase family. As to quaternary structure, monomer.

The protein localises to the cytoplasm. The catalysed reaction is tRNA(Arg) + L-arginine + ATP = L-arginyl-tRNA(Arg) + AMP + diphosphate. The protein is Arginine--tRNA ligase of Lactiplantibacillus plantarum (strain ATCC BAA-793 / NCIMB 8826 / WCFS1) (Lactobacillus plantarum).